Here is a 199-residue protein sequence, read N- to C-terminus: MEQSEEGQQQQQQGVMDYVPPHAYQSGPVNAASHMAFQQAHHFHHHHQQQQQQQLQMFWANQMQEIEHTTDFKNHTLPLARIKKIMKADEDVRMISAEAPVIFAKACEMFILELTLRAWIHTEENKRRTLQKNDIAAAISRTDVFDFLVDIIPRDELKEEGLGVTKGTIPSVVGSPPYYYLQQQGMMQHWPQEQHPDES.

Belongs to the NFYC/HAP5 subunit family. Heterotrimeric transcription factor composed of three components, NF-YA, NF-YB and NF-YC. NF-YB and NF-YC must interact and dimerize for NF-YA association and DNA binding. Interacts with HTT1 in both cytoplasm and nucleus. As to expression, ubiquitous.

It localises to the nucleus. The protein resides in the cytoplasm. In terms of biological role, stimulates the transcription of various genes by recognizing and binding to a CCAAT motif in promoters. The protein is Nuclear transcription factor Y subunit C-2 (NFYC2) of Arabidopsis thaliana (Mouse-ear cress).